A 643-amino-acid chain; its full sequence is Versicolorin B synthase (643 aa).

The propeptide occupies Met-1 to Met-41. FAD-binding positions include Thr-84–Ala-85 and Glu-105–Ala-106. Asn-116 carries N-linked (GlcNAc...) asparagine glycosylation. Residue Gly-171 to Leu-174 coordinates FAD. Asn-221 and Asn-507 each carry an N-linked (GlcNAc...) asparagine glycan. FAD contacts are provided by residues Ala-613 and Pro-624 to Met-625.

The protein belongs to the GMC oxidoreductase family. In terms of assembly, homodimer. Requires FAD as cofactor. N-glycosylated.

It localises to the cytoplasm. It is found in the cytosol. It carries out the reaction (2S-3S)-versiconal hemiacetal = versicolorin B + H2O. The enzyme catalyses (S)-5'-oxoaverantin + H(+) = (1'S,5'S)-averufin + H2O. It functions in the pathway mycotoxin biosynthesis; aflatoxin biosynthesis. Its function is as follows. Dual cyclase; part of the gene cluster that mediates the biosynthesis of aflatoxins, a group of polyketide-derived furanocoumarins, and part of the most toxic and carcinogenic compounds among the known mycotoxins. The four major aflatoxins produced by A.parasiticus are aflatoxin B1 (AFB1), aflatoxin B2 (AFB2), aflatoxin G1 (AFG1) and aflatoxin G2 (AFG2). Aflk plays a dual role within the aflatoxin pathway, as a 5'-oxoaverantin cyclase that mediates conversion of 5'-oxoaverantin (OAVN) to averufin (AVF), as well as a versicolorin B synthase that converts versiconal (VAL) to versicolorin B (VERB) by closing the bisfuran ring of aflatoxin which is required for DNA-binding, thus giving to aflatoxin its activity as a mutagen. The biosynthesis of aflatoxins begins with the norsolorinic acid synthase aflC that combines a hexanoyl starter unit produced by the fatty acid synthase aflA/aflB and 7 malonyl-CoA extender units to synthesize the precursor NOR. The second step is the conversion of NOR to averantin and requires the norsolorinic acid ketoreductase aflD, which catalyzes the dehydration of norsolorinic acid to form (1'S)-averantin. The norsolorinic acid reductases aflE and aflF may also play a role in the conversion of NOR to AVN. The cytochrome P450 monooxygenase aflG then catalyzes the hydroxylation of AVN to 5'hydroxyaverantin (HAVN). The next step is performed by the 5'-hydroxyaverantin dehydrogenase aflH that transforms HAVN to 5'-oxoaverantin (OAVN) which is further converted to averufin (AVF) by aflK that plays a dual role in the pathway, as a 5'-oxoaverantin cyclase that mediates conversion of 5'-oxoaverantin, as well as a versicolorin B synthase in a later step in the pathway. The averufin oxidase aflI catalyzes the conversion of AVF to versiconal hemiacetal acetate (VHA). VHA is then the substrate for the versiconal hemiacetal acetate esterase aflJ to yield versiconal (VAL). Versicolorin B synthase aflK then converts VAL to versicolorin B (VERB) by closing the bisfuran ring of aflatoxin which is required for DNA-binding, thus giving to aflatoxin its activity as a mutagen. Then, the activity of the versicolorin B desaturase aflL leads to versicolorin A (VERA). A branch point starts from VERB since it can also be converted to dihydrodemethylsterigmatocystin (DMDHST), probably also by aflL, VERA being a precursor for aflatoxins B1 and G1, and DMDHST for aflatoxins B2 and G2. Next, the versicolorin reductase aflM and the cytochrome P450 monooxygenase aflN are involved in conversion of VERA to demethylsterigmatocystin (DMST). AflX and aflY seem also involved in this step, through probable aflX-mediated epoxide ring-opening step following versicolorin A oxidation and aflY-mediated Baeyer-Villiger oxidation required for the formation of the xanthone ring. The methyltransferase aflO then leads to the modification of DMST to sterigmatocystin (ST), and of DMDHST to dihydrosterigmatocystin (DHST). Both ST and DHST are then substrates of the O-methyltransferase aflP to yield O-methylsterigmatocystin (OMST) and dihydro-O-methylsterigmatocystin (DHOMST), respectively. Finally OMST is converted to aflatoxins B1 and G1, and DHOMST to aflatoxins B2 and G2, via the action of several enzymes including O-methylsterigmatocystin oxidoreductase aflQ, the cytochrome P450 monooxygenase aflU, but also the NADH-dependent flavin oxidoreductase nadA which is specifically required for the synthesis of AFG1. This chain is Versicolorin B synthase, found in Aspergillus parasiticus (strain ATCC 56775 / NRRL 5862 / SRRC 143 / SU-1).